The primary structure comprises 543 residues: Chaperonin GroEL 2 (543 aa).

ATP is bound by residues 29-32 (TLGP), 86-90 (DGTTT), glycine 413, 478-480 (NAA), and aspartate 494.

Belongs to the chaperonin (HSP60) family. Forms a cylinder of 14 subunits composed of two heptameric rings stacked back-to-back. Interacts with the co-chaperonin GroES.

The protein localises to the cytoplasm. It carries out the reaction ATP + H2O + a folded polypeptide = ADP + phosphate + an unfolded polypeptide.. Functionally, together with its co-chaperonin GroES, plays an essential role in assisting protein folding. The GroEL-GroES system forms a nano-cage that allows encapsulation of the non-native substrate proteins and provides a physical environment optimized to promote and accelerate protein folding. The chain is Chaperonin GroEL 2 from Thermosynechococcus vestitus (strain NIES-2133 / IAM M-273 / BP-1).